A 538-amino-acid polypeptide reads, in one-letter code: Reticuline oxidase (538 aa).

The signal sequence occupies residues 1–23; sequence MENKTPIFFSLSIFLSLLNCALG. A disulfide bridge connects residues C30 and C89. An N-linked (GlcNAc...) asparagine glycan is attached at N38. The region spanning 67–241 is the FAD-binding PCMH-type domain; sequence LISKPSAIIL…YAWKIKLLPV (175 aa). A cross-link (6-(S-cysteinyl)-8alpha-(pros-histidyl)-FAD (His-Cys)) is located at residues 104 to 166; it reads HSYEGLSYTS…SKLGFTAGWC (63 aa). N423 and N471 each carry an N-linked (GlcNAc...) asparagine glycan.

It belongs to the oxygen-dependent FAD-linked oxidoreductase family. FAD serves as cofactor. Requires a metal cation as cofactor. Post-translationally, the FAD cofactor is bound via a bicovalent 6-S-cysteinyl, 8alpha-N1-histidyl FAD linkage.

It localises to the cytoplasmic vesicle. The catalysed reaction is (S)-reticuline + O2 = (S)-scoulerine + H2O2 + H(+). Its pathway is alkaloid biosynthesis; (S)-scoulerine biosynthesis; (S)-scoulerine from (S)-reticuline: step 1/1. In terms of biological role, essential to the formation of benzophenanthridine alkaloids in the response of plants to pathogenic attack. Catalyzes the stereospecific conversion of the N-methyl moiety of (S)-reticuline into the berberine bridge carbon of (S)-scoulerine. This is Reticuline oxidase (BBE1) from Eschscholzia californica (California poppy).